The sequence spans 579 residues: MFS-type transporter sphD (579 aa).

The disordered stretch occupies residues 17 to 62 (SAFAVRAEPDSEPVSEKQGTAETDAETGAGGTEVPAERNGEDDVER). The span at 51–62 (PAERNGEDDVER) shows a compositional bias: basic and acidic residues. 8 consecutive transmembrane segments (helical) span residues 73–93 (AFIG…ALGI), 110–130 (FWAN…WASI), 138–158 (PPLY…AVAQ), 168–188 (VLQG…LADM), 200–220 (LMAI…ALFA), 227–247 (WIGW…FFFL), 267–287 (WIGM…LSWA), and 294–314 (GAWQ…IFAF). A glycan (N-linked (GlcNAc...) asparagine) is linked at Asn335. The next 6 membrane-spanning stretches (helical) occupy residues 338 to 358 (LVGG…LPLI), 367 to 391 (AILS…SMML), 398 to 419 (YVWI…LALF), 429 to 449 (LGLP…LLPM), 460 to 480 (GLAI…GLTI), and 541 to 561 (FQTI…TSLF).

It belongs to the major facilitator superfamily.

It is found in the membrane. Its function is as follows. MFS-type transporter; part of the gene cluster that mediates the biosynthesis of sphingofungins, bioactive molecules acting as sphingolipid inhibitors via inhibiting serine palmitoyl transferase (SPT). This is MFS-type transporter sphD from Aspergillus fumigatus (strain CBS 144.89 / FGSC A1163 / CEA10) (Neosartorya fumigata).